The chain runs to 501 residues: NAD(P)H-quinone oxidoreductase chain 4, chloroplastic (501 aa).

Transmembrane regions (helical) follow at residues 5 to 25 (FPWL…IFFL), 38 to 58 (TCIC…HFQL), 88 to 108 (IGPI…AWPV), 114 to 131 (LFYL…GLFS), 135 to 155 (LLLF…LLSM), 168 to 188 (FILY…GMGL), 209 to 229 (ALEI…SPII), 243 to 263 (HYST…YGLI), 273 to 293 (AHSL…IYAA), 306 to 326 (IACS…SITD), 331 to 351 (GAIL…FLSG), 387 to 407 (LALP…GIIT), 417 to 437 (ILIT…LLSM), and 464 to 484 (FVSI…DCVF).

It belongs to the complex I subunit 4 family.

Its subcellular location is the plastid. It is found in the chloroplast thylakoid membrane. The catalysed reaction is a plastoquinone + NADH + (n+1) H(+)(in) = a plastoquinol + NAD(+) + n H(+)(out). It carries out the reaction a plastoquinone + NADPH + (n+1) H(+)(in) = a plastoquinol + NADP(+) + n H(+)(out). The polypeptide is NAD(P)H-quinone oxidoreductase chain 4, chloroplastic (Dioscorea elephantipes (Elephant's foot yam)).